A 298-amino-acid polypeptide reads, in one-letter code: ATP synthase gamma chain (298 aa).

It belongs to the ATPase gamma chain family. In terms of assembly, F-type ATPases have 2 components, CF(1) - the catalytic core - and CF(0) - the membrane proton channel. CF(1) has five subunits: alpha(3), beta(3), gamma(1), delta(1), epsilon(1). CF(0) has three main subunits: a, b and c.

The protein resides in the cell membrane. In terms of biological role, produces ATP from ADP in the presence of a proton gradient across the membrane. The gamma chain is believed to be important in regulating ATPase activity and the flow of protons through the CF(0) complex. The protein is ATP synthase gamma chain of Frankia casuarinae (strain DSM 45818 / CECT 9043 / HFP020203 / CcI3).